Reading from the N-terminus, the 429-residue chain is Phenylalanine--tRNA ligase, chloroplastic/mitochondrial (429 aa).

The transit peptide at Met1–Ser53 directs the protein to the chloroplast and mitochondrion. The residue at position 54 (Ala54) is an N-acetylalanine. Residues Ser163 to Gln166, Arg185, Thr192 to Tyr194, Gln199 to Glu201, Glu269, and Phe294 each bind substrate. Residues Ser338–Arg429 form the FDX-ACB domain.

The protein belongs to the class-II aminoacyl-tRNA synthetase family. As to quaternary structure, monomer.

The protein localises to the plastid. The protein resides in the chloroplast stroma. It is found in the mitochondrion matrix. It catalyses the reaction tRNA(Phe) + L-phenylalanine + ATP = L-phenylalanyl-tRNA(Phe) + AMP + diphosphate + H(+). Its function is as follows. Is responsible for the charging of tRNA(Phe) with phenylalanine in mitochondrial translation. The chain is Phenylalanine--tRNA ligase, chloroplastic/mitochondrial from Arabidopsis thaliana (Mouse-ear cress).